A 98-amino-acid chain; its full sequence is Gas vesicle protein J2 (98 aa).

The interval 75–98 is disordered; the sequence is AGVDADDSKSVLERPDPPTTEGSE. The segment covering 80–90 has biased composition (basic and acidic residues); the sequence is DDSKSVLERPD.

Belongs to the gas vesicle GvpA family. In terms of assembly, gvpF to GvpM interact with each other in vitro, and may form multi-subunit complex(es). Interacts with GvpA.

It localises to the gas vesicle. Functionally, a minor component of the gas vesicle. Proteins GvpF to GvpM might be involved in nucleating gas vesicle formation. Gas vesicles are hollow, gas filled proteinaceous nanostructures found in several microbial planktonic microorganisms. They allow positioning of halobacteria at the optimal depth for growth in the poorly aerated, shallow brine pools of their habitat. Expression of 2 c-vac DNA fragments containing 2 divergently transcribed regions (gvpE-gvpF-gvpG-gvpH-gvpI-gvpJ-gvpK-gvpL-gvpM and gvpA-gvpC-gvpN-gvpO) allows H.volcanii to produce gas vesicles. In Halobacterium salinarum (strain ATCC 700922 / JCM 11081 / NRC-1) (Halobacterium halobium), this protein is Gas vesicle protein J2.